We begin with the raw amino-acid sequence, 545 residues long: Mediator of RNA polymerase II transcription subunit 17 (545 aa).

Residues 148 to 168 are disordered; sequence TVPPSSLQFSRSQPPESKESD. Polar residues predominate over residues 149 to 162; it reads VPPSSLQFSRSQPP.

The protein belongs to the Mediator complex subunit 17 family. In terms of assembly, component of the Mediator complex. Interacts with med18, prk1 and rbp1.

The protein resides in the nucleus. Its function is as follows. Component of the Mediator complex, a coactivator involved in the regulated transcription of nearly all RNA polymerase II-dependent genes. Mediator functions as a bridge to convey information from gene-specific regulatory proteins to the basal RNA polymerase II transcription machinery. Mediator is recruited to promoters by direct interactions with regulatory proteins and serves as a scaffold for the assembly of a functional preinitiation complex with RNA polymerase II and the general transcription factors. In Schizosaccharomyces pombe (strain 972 / ATCC 24843) (Fission yeast), this protein is Mediator of RNA polymerase II transcription subunit 17 (med17).